The chain runs to 509 residues: MSSVLKAYERFTLTQELQDQSEEGTIPPTTLKPVIRVFILTSNNPELRSRLLLFCLRIVLSNGARDSHRFGALLTMFSLPSATMLNHVKLADQSPEADIERVEIDGFEEGSFRLIPNARSGMSRGEINAYAALAEDLPDTLNHATPFVDSEVEGTAWDEIETFLDMCYSVLMQAWIVTCKCMTAPDQPAASIEKRLQKYRQQGRINPRYLLQPEARRIIQNVIRKGMVVRHFLTFELQLARAQSLVSNRYYAMVGDVGKYIENCGMGGFFLTLKYALGTRWPTLALAAFSGELTKLKSLMALYQTLGEQARYLALLESPHLMDFAAANYPLLYSYAMGIGYVLDVNMRNYAFSRSYMNKTYFQLGMETARKQQGAVDMRMAEDLGLTQAERTEMANTLAKLTTANRGADTRGGVNPFSSVTGTTQVPAAATGDTLESYMAADRLRQRYADAGTHDDEMPPLEEEEEDDTSAGPRTGPTLEQVALDIQNAAVGAPIHTDDLNAALGDLDI.

The interval 1–404 (MSSVLKAYER…ANTLAKLTTA (404 aa)) is ncore. RNA contacts are provided by Lys180, Arg195, Tyr260, Tyr350, and Arg354. The ntail stretch occupies residues 405–509 (NRGADTRGGV…LNAALGDLDI (105 aa)). The disordered stretch occupies residues 452–477 (GTHDDEMPPLEEEEEDDTSAGPRTGP). Residues 458–469 (MPPLEEEEEDDT) are compositionally biased toward acidic residues.

The protein belongs to the paramyxoviruses nucleocapsid family. In terms of assembly, homomultimer; forms the nucleocapsid. Binds to the viral genomic RNA. N0 interacts with the phosphoprotein (via N-terminus); this interaction allows P to chaperon N0 to avoid N polymerization before encapsidation. Interacts as N-RNA template with the phosphoprotein (via C-terminus); this interaction positions the polymerase on the template.

It localises to the virion. Its subcellular location is the host cytoplasm. Functionally, forms the helical nucleocapsid (NC), protecting the genome from nucleases. The encapsidated genomic RNA serves as template for transcription and replication; encapsidation by N is coupled to RNA synthesis. Forms the encapsidation complex with the phosphoprotein protein P. Before encapsidation, the newly synthesized free N protein, so-called N0, is chaperoned by P. The polypeptide is Nucleoprotein (NP) (Canis lupus familiaris (Dog)).